A 114-amino-acid polypeptide reads, in one-letter code: T cell receptor beta variable 6-2 (114 aa).

Residues 1 to 21 (MSLGLLCCGAFSLLWAGPVNA) form the signal peptide. The region spanning 22–114 (GVTQTPKFRV…TSVYFCASSY (93 aa)) is the Ig-like domain. A disulfide bridge links cysteine 42 with cysteine 110. Residue asparagine 84 is glycosylated (N-linked (GlcNAc...) asparagine).

In terms of assembly, alpha-beta TR is a heterodimer composed of an alpha and beta chain; disulfide-linked. The alpha-beta TR is associated with the transmembrane signaling CD3 coreceptor proteins to form the TR-CD3 (TcR or TCR). The assembly of alpha-beta TR heterodimers with CD3 occurs in the endoplasmic reticulum where a single alpha-beta TR heterodimer associates with one CD3D-CD3E heterodimer, one CD3G-CD3E heterodimer and one CD247 homodimer forming a stable octameric structure. CD3D-CD3E and CD3G-CD3E heterodimers preferentially associate with TR alpha and TR beta chains, respectively. The association of the CD247 homodimer is the last step of TcR assembly in the endoplasmic reticulum and is required for transport to the cell surface.

The protein localises to the cell membrane. V region of the variable domain of T cell receptor (TR) beta chain that participates in the antigen recognition. Alpha-beta T cell receptors are antigen specific receptors which are essential to the immune response and are present on the cell surface of T lymphocytes. Recognize peptide-major histocompatibility (MH) (pMH) complexes that are displayed by antigen presenting cells (APC), a prerequisite for efficient T cell adaptive immunity against pathogens. Binding of alpha-beta TR to pMH complex initiates TR-CD3 clustering on the cell surface and intracellular activation of LCK that phosphorylates the ITAM motifs of CD3G, CD3D, CD3E and CD247 enabling the recruitment of ZAP70. In turn ZAP70 phosphorylates LAT, which recruits numerous signaling molecules to form the LAT signalosome. The LAT signalosome propagates signal branching to three major signaling pathways, the calcium, the mitogen-activated protein kinase (MAPK) kinase and the nuclear factor NF-kappa-B (NF-kB) pathways, leading to the mobilization of transcription factors that are critical for gene expression and essential for T cell growth and differentiation. The T cell repertoire is generated in the thymus, by V-(D)-J rearrangement. This repertoire is then shaped by intrathymic selection events to generate a peripheral T cell pool of self-MH restricted, non-autoaggressive T cells. Post-thymic interaction of alpha-beta TR with the pMH complexes shapes TR structural and functional avidity. The polypeptide is T cell receptor beta variable 6-2 (Homo sapiens (Human)).